The sequence spans 282 residues: Shikimate dehydrogenase (NADP(+)) (282 aa).

Shikimate contacts are provided by residues 15 to 17 (SKS) and threonine 62. The active-site Proton acceptor is the lysine 66. Shikimate is bound by residues asparagine 87 and aspartate 103. NADP(+) is bound by residues 127–131 (GAGGA), 151–156 (NRTHTK), and methionine 220. Tyrosine 222 is a binding site for shikimate. Residue glycine 244 participates in NADP(+) binding.

It belongs to the shikimate dehydrogenase family. Homodimer.

The enzyme catalyses shikimate + NADP(+) = 3-dehydroshikimate + NADPH + H(+). The protein operates within metabolic intermediate biosynthesis; chorismate biosynthesis; chorismate from D-erythrose 4-phosphate and phosphoenolpyruvate: step 4/7. Functionally, involved in the biosynthesis of the chorismate, which leads to the biosynthesis of aromatic amino acids. Catalyzes the reversible NADPH linked reduction of 3-dehydroshikimate (DHSA) to yield shikimate (SA). The protein is Shikimate dehydrogenase (NADP(+)) of Shewanella baltica (strain OS195).